We begin with the raw amino-acid sequence, 266 residues long: Glutathione S-transferase AN1595 (266 aa).

Positions serine 43–threonine 123 constitute a GST N-terminal domain. Lysine 93, glutamate 107, cysteine 108, and asparagine 143 together coordinate glutathione. Lysine 93 lines the substrate pocket. The region spanning serine 128–proline 259 is the GST C-terminal domain.

This sequence belongs to the GST superfamily.

It functions in the pathway secondary metabolite biosynthesis; terpenoid biosynthesis. In terms of biological role, glutathione S-transferase; part of the gene cluster that mediates the biosynthesis of the diterpene ent-pimara-8(14),15-diene (PD). Within the cluster, the HMG-CoA reductase AN1593 functions in the mevalonate pathway, which produces isoprenoid precursors. The geranylgeranyl pyrophosphate (GGPP) synthase AN1592 is needed in the formation of GGPP, the precursor for diterpenes. Lastly, the pimaradiene synthase pbcA performs the 2 cyclization steps that convert GGPP to ent-pimara-8(14),15-diene. The putative roles of the remaining cluster enzymes in ent-pimara-8(14),15-diene biosynthesis is unclear. The cytochrome P450 monooxygenase AN1598, the glutathione S-transferase AN1595, the oxidoreductases AN1596 and AN1597 probably function as decorative enzymes. It is possible that in biological conditions the compound is oxidized to ent-pimara-8(14),15-dien-19-oic acid, which is a bioactive diterpene compound predominant in many plant extracts. This chain is Glutathione S-transferase AN1595, found in Emericella nidulans (strain FGSC A4 / ATCC 38163 / CBS 112.46 / NRRL 194 / M139) (Aspergillus nidulans).